The following is a 489-amino-acid chain: MPNILHPFIIIMTLLVVATGNQASIDKTTQWPRMKPTKKPPPRDEGPSKLGSISTTVSPTAIGITEEVTDAMMDAYTITSTGSTTFSSDTYSADYHTEAMVPPGVGPGNYTLDYNECFFNFCECCPPERGPPGPVGEKGLPGIPGGKGEMGPPGPPGQEGLTGAPGTHGVKGEKGDTGASGLPGIPGVTGKQGEKGESGPKGDKGDTGFPGLKGDPGERGEPGWNGTKGGMGEPGKQGLTGPPGPDGIKGEKGDKGDCPFGEKGQKGSIGEPGPQGPKGDPGVPGTNGTDGLPGSKGPKGDPGPLSKQGEPGPPGPQGPPGQRGMPGMKGTRGLKGARGIRGFKGFKGEPAVQKRSAFSVGLFPSRSFPPPGLPIRFDKIIYNEEAHWDPNASKFNCTHGGVYVFSYYITVRNRPLRAALVVNGIRKLRTRDSLYGQDIDQASNMAVLRLSSGDQVWLETLRDWNGVYSSSEDDSTFSGFLLYADATKD.

Residues 1-23 form the signal peptide; the sequence is MPNILHPFIIIMTLLVVATGNQA. Residues 27–57 form a disordered region; sequence KTTQWPRMKPTKKPPPRDEGPSKLGSISTTV. An N-linked (GlcNAc...) asparagine glycan is attached at Asn109. A disordered region spans residues 133 to 335; sequence GPVGEKGLPG…PGMKGTRGLK (203 aa). Over residues 142 to 151 the composition is skewed to gly residues; it reads GIPGGKGEMG. 3 Collagen-like domains span residues 145 to 204, 205 to 255, and 264 to 323; these read GGKG…KGDK, GDTG…KGDK, and GQKG…PGQR. Positions 192 to 206 are enriched in basic and acidic residues; the sequence is QGEKGESGPKGDKGD. Asn225 carries an N-linked (GlcNAc...) asparagine glycan. Residues 226–235 show a composition bias toward gly residues; it reads GTKGGMGEPG. A compositionally biased stretch (basic and acidic residues) spans 248-257; sequence IKGEKGDKGD. Residue Asn287 is glycosylated (N-linked (GlcNAc...) asparagine). The span at 290-310 shows a compositional bias: low complexity; the sequence is DGLPGSKGPKGDPGPLSKQGE. Residues 351-488 form the C1q domain; it reads AVQKRSAFSV…GFLLYADATK (138 aa). N-linked (GlcNAc...) asparagine glycans are attached at residues Asn391 and Asn396.

The protein belongs to the OTOL1 family. As to quaternary structure, homooligomer; disulfide-linked; probably forms homotrimers. Interacts with otomp.

It localises to the secreted. Its subcellular location is the extracellular space. It is found in the extracellular matrix. Collagen-like protein, which provides an organic scaffold for otoliths onto the sensory epithelium of the inner ear. Acts as a scaffold for biomineralization by sequestering calcium. In Danio rerio (Zebrafish), this protein is Otolin-1-A (otol1a).